We begin with the raw amino-acid sequence, 112 residues long: uncharacterized protein (112 aa).

The interval 90 to 112 (KNFNNSKNDQIKKKKIDNNQVNL) is disordered.

This is an uncharacterized protein from Buchnera aphidicola subsp. Acyrthosiphon pisum (strain APS) (Acyrthosiphon pisum symbiotic bacterium).